Reading from the N-terminus, the 64-residue chain is Large ribosomal subunit protein eL24 (64 aa).

Residues cysteine 6, cysteine 9, cysteine 32, and cysteine 36 each coordinate Zn(2+). Residues 6-36 (CNFCGKSIEPGTGKKFVKKDGSVMFICSSKC) form a C4-type zinc finger.

The protein belongs to the eukaryotic ribosomal protein eL24 family. In terms of assembly, part of the 50S ribosomal subunit. Forms a cluster with proteins L3 and L14. Zn(2+) serves as cofactor.

Its function is as follows. Binds to the 23S rRNA. In Methanococcus aeolicus (strain ATCC BAA-1280 / DSM 17508 / OCM 812 / Nankai-3), this protein is Large ribosomal subunit protein eL24.